The sequence spans 938 residues: Isoleucine--tRNA ligase (938 aa).

A 'HIGH' region motif is present at residues 58-68 (PYANGSIHIGH). At Lys183 the chain carries N6-acetyllysine. Glu561 is a binding site for L-isoleucyl-5'-AMP. The short motif at 602-606 (KMSKS) is the 'KMSKS' region element. Residue Lys605 coordinates ATP. Zn(2+) is bound by residues Cys901, Cys904, Cys921, and Cys924.

This sequence belongs to the class-I aminoacyl-tRNA synthetase family. IleS type 1 subfamily. In terms of assembly, monomer. The cofactor is Zn(2+).

Its subcellular location is the cytoplasm. It carries out the reaction tRNA(Ile) + L-isoleucine + ATP = L-isoleucyl-tRNA(Ile) + AMP + diphosphate. Functionally, catalyzes the attachment of isoleucine to tRNA(Ile). As IleRS can inadvertently accommodate and process structurally similar amino acids such as valine, to avoid such errors it has two additional distinct tRNA(Ile)-dependent editing activities. One activity is designated as 'pretransfer' editing and involves the hydrolysis of activated Val-AMP. The other activity is designated 'posttransfer' editing and involves deacylation of mischarged Val-tRNA(Ile). This is Isoleucine--tRNA ligase from Escherichia coli O6:H1 (strain CFT073 / ATCC 700928 / UPEC).